The primary structure comprises 75 residues: Small ribosomal subunit protein bS18 (75 aa).

The protein belongs to the bacterial ribosomal protein bS18 family. Part of the 30S ribosomal subunit. Forms a tight heterodimer with protein bS6.

Functionally, binds as a heterodimer with protein bS6 to the central domain of the 16S rRNA, where it helps stabilize the platform of the 30S subunit. This is Small ribosomal subunit protein bS18 from Psychromonas ingrahamii (strain DSM 17664 / CCUG 51855 / 37).